We begin with the raw amino-acid sequence, 90 residues long: MKALKIRVEGIVQGVGFRYFTRRVAKSLGVKGYVMNMDDGSVFIHAEGDENALRRFLNEVAKGPPAAVVTNVSVEETTPEGYEDFTIKYY.

An Acylphosphatase-like domain is found at 3-89 (ALKIRVEGIV…EGYEDFTIKY (87 aa)). Catalysis depends on residues R18 and N36.

This sequence belongs to the acylphosphatase family.

The catalysed reaction is an acyl phosphate + H2O = a carboxylate + phosphate + H(+). The protein is Acylphosphatase (acyP) of Thermotoga maritima (strain ATCC 43589 / DSM 3109 / JCM 10099 / NBRC 100826 / MSB8).